A 325-amino-acid chain; its full sequence is mRNA decay activator protein ZFP36 (325 aa).

The segment at 1-15 is necessary for nuclear export; it reads MDLAAIYKSLLSLSP. The tract at residues 1-98 is necessary and sufficient for the association with mRNA decay enzymes and mRNA decay activation; that stretch reads MDLAAIYKSL…PTSPTATPTT (98 aa). Necessary for localization of ARE-containing mRNAs to processing bodies (PBs) stretches follow at residues 1–172 and 98–325; these read MDLA…DLAA and TSSR…SVSE. Residues 15 to 48 are compositionally biased toward low complexity; that stretch reads PELPSDLGETESSTSWASSGPWSLSSSDSSLPEA. Residues 15–101 are disordered; that stretch reads PELPSDLGET…PTATPTTSSR (87 aa). Ser-58 is subject to Phosphoserine; by MAPKAPK2. Phosphoserine is present on Ser-64. One copy of the P-P-P-P-G repeat lies at 69–73; the sequence is PPPPG. Positions 75 to 101 are enriched in low complexity; the sequence is APLAPRPSSELSPSPTSPTATPTTSSR. A phosphoserine mark is found at Ser-86 and Ser-88. At Thr-90 the chain carries Phosphothreonine. The residue at position 91 (Ser-91) is a Phosphoserine. The interval 93–166 is necessary for nuclear localization; the sequence is TATPTTSSRY…GSRCHFIHNP (74 aa). The segment at 95-171 is necessary for RNA-binding; sequence TPTTSSRYKT…FIHNPSEDLA (77 aa). 2 C3H1-type zinc fingers span residues 101-129 and 139-167; these read RYKTELCRTFSESGRCRYGAKCQFAHGLG and KYKTELCHKFYLQGRCPYGSRCHFIHNPS. The necessary for interaction with PABPN1 stretch occupies residues 101–192; that stretch reads RYKTELCRTF…ISFSGLPSGR (92 aa). Ser-167 is modified (phosphoserine). The interval 172-325 is necessary for mRNA decay activation; sequence APGHPHVLRQ…PIFNRISVSE (154 aa). Residue Ser-184 is modified to Phosphoserine; by MAPKAPK2. 2 disordered regions span residues 185–248 and 260–325; these read FSGL…TPAC and VWGP…SVSE. A Phosphoserine modification is found at Ser-195. Residues 196–200 form a P-P-P-P-G repeat; it reads PPPAS. The span at 204 to 214 shows a compositional bias: low complexity; it reads PSVPSWSFSPS. Ser-216 carries the post-translational modification Phosphoserine. One copy of the P-P-P-P-G repeat lies at 217–222; the sequence is PPPPPG. Ser-227 carries the post-translational modification Phosphoserine; by MAPK1; in vitro. Residues Ser-275, Ser-295, and Ser-322 each carry the phosphoserine modification. The span at 285 to 295 shows a compositional bias: low complexity; it reads SSGSSLGGSDS. Residues 311 to 325 form an interaction with CNOT1 region; that stretch reads APRRLPIFNRISVSE.

As to quaternary structure, associates with cytoplasmic CCR4-NOT and PAN2-PAN3 deadenylase complexes to trigger ARE-containing mRNA deadenylation and decay processes. Part of a mRNA decay activation complex at least composed of poly(A)-specific exoribonucleases CNOT6, EXOSC2 and XRN1 and mRNA-decapping enzymes DCP1A and DCP2. Associates with the RNA exosome complex. Interacts (via phosphorylated form) with 14-3-3 proteins; these interactions promote exclusion of ZFP36 from cytoplasmic stress granules in response to arsenite treatment in a MAPKAPK2-dependent manner and does not prevent CCR4-NOT deadenylase complex recruitment or ZFP36-induced ARE-containing mRNA deadenylation and decay processes. Interacts with 14-3-3 proteins; these interactions occur in response to rapamycin in an Akt-dependent manner. Interacts with AGO2 and AGO4. Interacts (via C-terminus) with CNOT1; this interaction occurs in a RNA-independent manner and induces mRNA deadenylation. Interacts (via N-terminus) with CNOT6. Interacts with CNOT6L. Interacts (via C-terminus) with CNOT7; this interaction occurs in a RNA-independent manner, induces mRNA deadenylation and is inhibited in a phosphorylation MAPKAPK2-dependent manner. Interacts (via unphosphorylated form) with CNOT8; this interaction occurs in a RNA-independent manner and is inhibited in a phosphorylation MAPKAPK2-dependent manner. Interacts with DCP1A. Interacts (via N-terminus) with DCP2. Interacts with EDC3. Interacts (via N-terminus) with EXOSC2. Interacts with heat shock 70 kDa proteins. Interacts with KHSRP; this interaction increases upon cytokine-induced treatment. Interacts with MAP3K4; this interaction enhances the association with SH3KBP1/CIN85. Interacts with MAPKAPK2; this interaction occurs upon skeletal muscle satellite cell activation. Interacts with NCL. Interacts with NUP214; this interaction increases upon lipopolysaccharide (LPS) stimulation. Interacts with PABPC1; this interaction occurs in a RNA-dependent manner. Interacts (via hypophosphorylated form) with PABPN1 (via RRM domain and C-terminal arginine-rich region); this interaction occurs in the nucleus in a RNA-independent manner, decreases in presence of single-stranded poly(A) RNA-oligomer and in a p38 MAPK-dependent-manner and inhibits nuclear poly(A) tail synthesis. Interacts with PAN2. Interacts (via C3H1-type zinc finger domains) with PKM. Interacts (via C3H1-type zinc finger domains) with nuclear RNA poly(A) polymerase. Interacts with PPP2CA; this interaction occurs in LPS-stimulated cells and induces ZFP36 dephosphorylation, and hence may promote ARE-containing mRNAs decay. Interacts (via C-terminus) with PRR5L (via C-terminus); this interaction may accelerate ZFP36-mediated mRNA decay during stress. Interacts (via C-terminus) with SFN; this interaction occurs in a phosphorylation-dependent manner. Interacts (via extreme C-terminal region) with SH3KBP1/CIN85 (via SH3 domains); this interaction enhances MAP3K4-induced phosphorylation of ZFP36 at Ser-64 and Ser-91 and does not alter neither ZFP36 binding to ARE-containing transcripts nor TNF-alpha mRNA decay. Interacts with XRN1. Interacts (via C-terminus and Ser-184 phosphorylated form) with YWHAB; this interaction occurs in a p38/MAPKAPK2-dependent manner, increases cytoplasmic localization of ZFP36 and protects ZFP36 from Ser-184 dephosphorylation by serine/threonine phosphatase 2A, and hence may be crucial for stabilizing ARE-containing mRNAs. Interacts (via phosphorylated form) with YWHAE. Interacts (via C-terminus) with YWHAG; this interaction occurs in a phosphorylation-dependent manner. Interacts with YWHAH; this interaction occurs in a phosphorylation-dependent manner. Interacts with YWHAQ; this interaction occurs in a phosphorylation-dependent manner. Interacts with (via C-terminus) YWHAZ; this interaction occurs in a phosphorylation-dependent manner. Does not interact with SH3KBP1. Interacts (via P-P-P-P-G repeats) with GIGYF2; the interaction is direct. In terms of processing, phosphorylated. Phosphorylation at serine and/or threonine residues occurs in a p38 MAPK- and MAPKAPK2-dependent manner. Phosphorylated by MAPKAPK2 at Ser-58 and Ser-184; phosphorylation increases its stability and cytoplasmic localization, promotes binding to 14-3-3 adapter proteins and inhibits the recruitment of cytoplasmic CCR4-NOT and PAN2-PAN3 deadenylase complexes to the mRNA decay machinery, thereby inhibiting ZFP36-induced ARE-containing mRNA deadenylation and decay processes. Phosphorylation by MAPKAPK2 does not impair ARE-containing RNA-binding. Phosphorylated in a MAPKAPK2- and p38 MAPK-dependent manner upon skeletal muscle satellite cell activation; this phosphorylation inhibits ZFP36-mediated mRNA decay activity, and hence stabilizes MYOD1 mRNA. Phosphorylated by MAPK1 upon mitogen stimulation. Phosphorylated at Ser-64 and Ser-91; these phosphorylations increase in a SH3KBP1-dependent manner. Phosphorylated at serine and threonine residues in a pyruvate kinase PKM- and p38 MAPK-dependent manner. Phosphorylation at Ser-58 may participate in the PKM-mediated degradation of ZFP36 in a p38 MAPK-dependent manner. Dephosphorylated by serine/threonine phosphatase 2A at Ser-184. Ubiquitinated; pyruvate kinase (PKM)-dependent ubiquitination leads to proteasomal degradation through a p38 MAPK signaling pathway.

It localises to the nucleus. The protein resides in the cytoplasm. The protein localises to the cytoplasmic granule. It is found in the P-body. Functionally, zinc-finger RNA-binding protein that destabilizes numerous cytoplasmic AU-rich element (ARE)-containing mRNA transcripts by promoting their poly(A) tail removal or deadenylation, and hence provide a mechanism for attenuating protein synthesis. Acts as an 3'-untranslated region (UTR) ARE mRNA-binding adapter protein to communicate signaling events to the mRNA decay machinery. Recruits deadenylase CNOT7 (and probably the CCR4-NOT complex) via association with CNOT1, and hence promotes ARE-mediated mRNA deadenylation. Also functions by recruiting components of the cytoplasmic RNA decay machinery to the bound ARE-containing mRNAs. Self regulates by destabilizing its own mRNA. Binds to 3'-UTR ARE of numerous mRNAs. Also binds to ARE of its own mRNA. Plays a role in anti-inflammatory responses; suppresses tumor necrosis factor (TNF)-alpha production by stimulating ARE-mediated TNF-alpha mRNA decay and several other inflammatory ARE-containing mRNAs in interferon (IFN)- and/or lipopolysaccharide (LPS)-induced macrophages. Also plays a role in the regulation of dendritic cell maturation at the post-transcriptional level, and hence operates as part of a negative feedback loop to limit the inflammatory response. Promotes ARE-mediated mRNA decay of hypoxia-inducible factor HIF1A mRNA during the response of endothelial cells to hypoxia. Positively regulates early adipogenesis of preadipocytes by promoting ARE-mediated mRNA decay of immediate early genes (IEGs). Negatively regulates hematopoietic/erythroid cell differentiation by promoting ARE-mediated mRNA decay of the transcription factor STAT5B mRNA. Plays a role in maintaining skeletal muscle satellite cell quiescence by promoting ARE-mediated mRNA decay of the myogenic determination factor MYOD1 mRNA. Also associates with and regulates the expression of non-ARE-containing target mRNAs at the post-transcriptional level, such as MHC class I mRNAs. Participates in association with argonaute RISC catalytic components in the ARE-mediated mRNA decay mechanism; assists microRNA (miRNA) targeting ARE-containing mRNAs. May also play a role in the regulation of cytoplasmic mRNA decapping; enhances decapping of ARE-containing RNAs, in vitro. Involved in the delivery of target ARE-mRNAs to processing bodies (PBs). In addition to its cytosolic mRNA-decay function, affects nuclear pre-mRNA processing. Negatively regulates nuclear poly(A)-binding protein PABPN1-stimulated polyadenylation activity on ARE-containing pre-mRNA during LPS-stimulated macrophages. Also involved in the regulation of stress granule (SG) and P-body (PB) formation and fusion. Plays a role in the regulation of keratinocyte proliferation, differentiation and apoptosis. Plays a role as a tumor suppressor by inhibiting cell proliferation in breast cancer cells. The sequence is that of mRNA decay activator protein ZFP36 from Ovis aries (Sheep).